Reading from the N-terminus, the 218-residue chain is Small ribosomal subunit protein uS3c (218 aa).

Residues 47–118 enclose the KH type-2 domain; it reads VQKNLKISSG…KLNITITRIA (72 aa).

The protein belongs to the universal ribosomal protein uS3 family. As to quaternary structure, part of the 30S ribosomal subunit.

Its subcellular location is the plastid. The protein resides in the chloroplast. The chain is Small ribosomal subunit protein uS3c (rps3) from Daucus carota (Wild carrot).